The following is a 355-amino-acid chain: NADH-quinone oxidoreductase subunit H (355 aa).

8 consecutive transmembrane segments (helical) span residues 25-45 (VVRI…LILW), 91-111 (WLYL…WAVI), 126-146 (LLYA…AGWA), 170-190 (MGFA…SEIV), 205-225 (FLSW…ISGI), 253-273 (MAFA…SALA), 290-310 (FIPG…VFIW), and 330-350 (VFLP…MSPL).

Belongs to the complex I subunit 1 family. As to quaternary structure, NDH-1 is composed of 14 different subunits. Subunits NuoA, H, J, K, L, M, N constitute the membrane sector of the complex.

The protein resides in the cell inner membrane. The enzyme catalyses a quinone + NADH + 5 H(+)(in) = a quinol + NAD(+) + 4 H(+)(out). Its function is as follows. NDH-1 shuttles electrons from NADH, via FMN and iron-sulfur (Fe-S) centers, to quinones in the respiratory chain. The immediate electron acceptor for the enzyme in this species is believed to be ubiquinone. Couples the redox reaction to proton translocation (for every two electrons transferred, four hydrogen ions are translocated across the cytoplasmic membrane), and thus conserves the redox energy in a proton gradient. This subunit may bind ubiquinone. This chain is NADH-quinone oxidoreductase subunit H, found in Burkholderia cenocepacia (strain HI2424).